The following is a 324-amino-acid chain: Galactosylgalactosylxylosylprotein 3-beta-glucuronosyltransferase 2 (324 aa).

Residues 1–2 (MK) lie on the Cytoplasmic side of the membrane. A helical; Signal-anchor for type II membrane protein transmembrane segment spans residues 3-23 (SALCNRFFILLPWILIVIIML). Residues 24 to 324 (DVDPRRPAPQ…YHMDTVNIEV (301 aa)) lie on the Lumenal side of the membrane. The disordered stretch occupies residues 34–78 (LTSRPYFSPHTVGCGGSRVPLRRSSPGRDAAEKRNESRPQLQPEP). Residue Asn68 is glycosylated (N-linked (GlcNAc...) asparagine). Residue Asp188 participates in Mn(2+) binding. The active-site Proton acceptor is Glu274. Residue Asn293 is glycosylated (N-linked (GlcNAc...) asparagine).

It belongs to the glycosyltransferase 43 family. As to quaternary structure, homodimer. It depends on Mn(2+) as a cofactor. Expressed in the cerebral cortex, cerebellum and whole brain.

The protein resides in the golgi apparatus membrane. It carries out the reaction 3-O-(beta-D-galactosyl-(1-&gt;3)-beta-D-galactosyl-(1-&gt;4)-beta-D-xylosyl)-L-seryl-[protein] + UDP-alpha-D-glucuronate = 3-O-(beta-D-GlcA-(1-&gt;3)-beta-D-Gal-(1-&gt;3)-beta-D-Gal-(1-&gt;4)-beta-D-Xyl)-L-seryl-[protein] + UDP + H(+). It functions in the pathway protein modification; protein glycosylation. In terms of biological role, involved in the biosynthesis of L2/HNK-1 carbohydrate epitope on both glycolipids and glycoproteins. Substrates include asialo-orosomucoid (ASOR), paragloboside (lacto-N-neotetraosylceramide), Gal-beta-1,4-GlcNAc-beta-1,3-Gal-beta-1,4-Glc-pyridylamine and Gal-beta-1,3-GlcNAc-beta-1,3-Gal-beta-1,4-Glc-pyridylamine. The polypeptide is Galactosylgalactosylxylosylprotein 3-beta-glucuronosyltransferase 2 (B3gat2) (Rattus norvegicus (Rat)).